Consider the following 148-residue polypeptide: Calmodulin-related protein 97A (148 aa).

4 consecutive EF-hand domains span residues Glu7 to Asn42, Pro43 to Glu78, Asp80 to Lys115, and Val116 to Lys148. Ca(2+) contacts are provided by Asp20, Thr24, Lys26, Glu31, Asn58, Asn60, Gln62, Glu67, Asp93, Asp95, Asp97, Glu104, Asp129, Asp131, Asp133, Met135, and Glu140.

Belongs to the calmodulin family.

Its function is as follows. May be involved in calcium-mediated signal transduction. The sequence is that of Calmodulin-related protein 97A (Acam) from Drosophila melanogaster (Fruit fly).